We begin with the raw amino-acid sequence, 140 residues long: uncharacterized protein (140 aa).

18-25 (GTNGSGKS) is an ATP binding site.

This is an uncharacterized protein from Haemophilus influenzae (strain ATCC 51907 / DSM 11121 / KW20 / Rd).